The sequence spans 49 residues: Large ribosomal subunit protein bL33A (49 aa).

This sequence belongs to the bacterial ribosomal protein bL33 family.

The protein is Large ribosomal subunit protein bL33A of Geobacillus kaustophilus (strain HTA426).